The sequence spans 2769 residues: Teneurin-4 (2769 aa).

Basic and acidic residues predominate over residues M1–Y22. A disordered region spans residues M1–L45. A Teneurin N-terminal domain is found at M1–C341. Residues M1 to S345 lie on the Cytoplasmic side of the membrane. S124 bears the Phosphoserine mark. The interval R130 to A233 is disordered. The span at R134–T155 shows a compositional bias: low complexity. Basic and acidic residues predominate over residues D156–H166. Residue T178 is modified to Phosphothreonine. Over residues H187–P211 the composition is skewed to polar residues. A helical transmembrane segment spans residues A346 to F366. The Extracellular segment spans residues G367–R2769. The interval P400–P426 is disordered. Residues T408–T417 are compositionally biased toward basic and acidic residues. N-linked (GlcNAc...) asparagine glycosylation occurs at N467. Residues A507–H526 form a disordered region. Positions P514–H526 are enriched in polar residues. 8 consecutive EGF-like domains span residues S562–G593, R594–D624, P626–E658, E659–E690, P692–S725, I726–Q757, R758–T787, and I788–D831. Disulfide bonds link C566-C576, C570-C581, C583-C592, C601-C612, C614-C623, C630-C641, C635-C646, C648-C657, C662-C673, C667-C678, C680-C689, C700-C713, C715-C724, C729-C739, C733-C744, C746-C755, C760-C770, C764-C775, C777-C786, C800-C810, C804-C819, and C821-C830. Residues N940 and N1259 are each glycosylated (N-linked (GlcNAc...) asparagine). 5 NHL repeats span residues S1216–N1259, L1264–T1308, T1334–I1378, L1393–R1444, and C1523–N1566. A YD 1 repeat occupies Y1576 to H1595. Residue N1609 is glycosylated (N-linked (GlcNAc...) asparagine). YD repeat units follow at residues Y1612–R1632, Y1675–F1694, and Y1695–R1717. N1705, N1741, N1799, and N1884 each carry an N-linked (GlcNAc...) asparagine glycan. YD repeat units follow at residues Y1887–E1906, Y1928–E1946, F1947–E1967, Y1974–D1991, F1992–K2013, Y2014–S2031, Y2034–T2054, Y2057–V2077, Y2085–P2104, Y2110–Y2127, Y2128–V2154, Y2156–Q2169, Y2170–S2193, Y2196–S2216, Y2217–L2237, Y2239–G2259, Y2271–Y2291, and Y2293–F2313. A glycan (N-linked (GlcNAc...) asparagine) is linked at N1985. The N-linked (GlcNAc...) asparagine glycan is linked to N2188. The N-linked (GlcNAc...) asparagine glycan is linked to N2328. The YD 23 repeat unit spans residues Y2339–I2380. An N-linked (GlcNAc...) asparagine glycan is attached at N2646.

Belongs to the tenascin family. Teneurin subfamily. In terms of assembly, homodimer; disulfide-linked. May also form heterodimer with either TENM1 or TENM2 or TENM3.

The protein resides in the cell membrane. The protein localises to the cell projection. It localises to the nucleus. Its subcellular location is the cytoplasm. Involved in neural development, regulating the establishment of proper connectivity within the nervous system. Plays a role in the establishment of the anterior-posterior axis during gastrulation. Regulates the differentiation and cellular process formation of oligodendrocytes and myelination of small-diameter axons in the central nervous system (CNS). Promotes activation of focal adhesion kinase. May function as a cellular signal transducer. This Homo sapiens (Human) protein is Teneurin-4 (TENM4).